The sequence spans 419 residues: Delta(8)-fatty-acid desaturase (419 aa).

The Cytochrome b5 heme-binding domain maps to 1–64 (MKSKRQALSP…LKRMPKINPS (64 aa)). The heme site is built by His24 and His47. Residues 110 to 130 (LGVLGYFLMVQYQMYFIGAVL) form a helical membrane-spanning segment. The short motif at 143 to 147 (HDICH) is the Histidine box-1 element. A helical membrane pass occupies residues 156-176 (WNNLVGLVFGNGLQGFSVTCW). The Histidine box-2 signature appears at 180-184 (HNAHH). 3 helical membrane passes run 226–246 (YFLV…VLTV), 266–286 (IGLA…MPSI), and 290–310 (LLVF…VVFM). The Histidine box-3 motif lies at 355–359 (QIEHH).

Belongs to the fatty acid desaturase type 1 family. Fe cation serves as cofactor.

The protein localises to the membrane. The enzyme catalyses an (11Z,14Z)-icosadienoyl-containing glycerolipid + 2 Fe(II)-[cytochrome b5] + O2 + 2 H(+) = an (8Z,11Z,14Z)-icosatrienoyl-containing glycerolipid + 2 Fe(III)-[cytochrome b5] + 2 H2O. It catalyses the reaction an (11Z,14Z,17Z)-icosatrienoyl-containing glycerolipid + 2 Fe(II)-[cytochrome b5] + O2 + 2 H(+) = an (8Z,11Z,14Z,17Z)-eicosatetraenoyl-containing glycerolipid + 2 Fe(III)-[cytochrome b5] + 2 H2O. It carries out the reaction an (11Z)-eicosenoyl-containing glycerolipid + 2 Fe(II)-[cytochrome b5] + O2 + 2 H(+) = a (8Z,11Z)-eicosadienoyl-containing glycerolipid + 2 Fe(III)-[cytochrome b5] + 2 H2O. The protein operates within lipid metabolism; fatty acid metabolism. Its function is as follows. Delta(8)-fatty-acid desaturase which introduces a double bond at the 8-position in 20-carbon chain length fatty acids (C20) that have an existing delta-11 unsaturation (double bond). Whether it acts on CoA-linked substrates (as in animals) or phospholipid-linked substrates (as in plants and fungi) is still not clear. This is Delta(8)-fatty-acid desaturase (efd1) from Euglena gracilis.